The sequence spans 237 residues: uncharacterized protein (237 aa).

The N-acetyltransferase domain occupies 119–237; sequence VTVRRLTPTD…PAGLDGGLPA (119 aa).

This is an uncharacterized protein from Streptomyces virginiae (Streptomyces cinnamonensis).